The primary structure comprises 466 residues: 3-isopropylmalate dehydratase large subunit (466 aa).

The [4Fe-4S] cluster site is built by Cys347, Cys407, and Cys410.

Belongs to the aconitase/IPM isomerase family. LeuC type 1 subfamily. In terms of assembly, heterodimer of LeuC and LeuD. [4Fe-4S] cluster serves as cofactor.

The enzyme catalyses (2R,3S)-3-isopropylmalate = (2S)-2-isopropylmalate. It functions in the pathway amino-acid biosynthesis; L-leucine biosynthesis; L-leucine from 3-methyl-2-oxobutanoate: step 2/4. In terms of biological role, catalyzes the isomerization between 2-isopropylmalate and 3-isopropylmalate, via the formation of 2-isopropylmaleate. This Escherichia coli O157:H7 protein is 3-isopropylmalate dehydratase large subunit.